Consider the following 557-residue polypeptide: Aerobic glycerol-3-phosphate dehydrogenase (557 aa).

21-49 (DVVIIGGGITGAGIALDASERGMKVALVE) provides a ligand contact to FAD.

It belongs to the FAD-dependent glycerol-3-phosphate dehydrogenase family. The cofactor is FAD.

The protein resides in the cytoplasm. It carries out the reaction a quinone + sn-glycerol 3-phosphate = dihydroxyacetone phosphate + a quinol. Its pathway is polyol metabolism; glycerol degradation via glycerol kinase pathway; glycerone phosphate from sn-glycerol 3-phosphate (aerobic route): step 1/1. The sequence is that of Aerobic glycerol-3-phosphate dehydrogenase (glpD) from Staphylococcus saprophyticus subsp. saprophyticus (strain ATCC 15305 / DSM 20229 / NCIMB 8711 / NCTC 7292 / S-41).